Reading from the N-terminus, the 458-residue chain is MSTGTVVQVIGAVVDVEFPHDAVPQVYDALEIKSEGLVLEVQQQLGGGVVRTIAMGSSDGLRRGLEVVNSGSPITVPVGEKTLGRIMNVLGQPVDEAGPIGEEDRYVIHREAPSYEDQSNTTELLETGIKVIDLVCPFAKGGKVGLFGGAGVGKTVNMMELINNIAKAHSGLSVFAGVGERTREGNDFYYEMEDSGVLDKVAMVYGQMNEPPGNRLRVALTGLTMAEKFRDEGKDVLFFVDNIYRYTLAGTEVSALLGRMPSAVGYQPTLAEEMGVLQERITSTKTGSITSVQAVYVPADDLTDPSPATTFAHLDATVVLSRNIASLGIYPAVDPLDSTSRQLDPQVVGQEHYDVANGVQTVLQRYKELKDIIAILGMDELSDEDKTTVFRARKIEKYLSQPFFVAEVFTGSPGKYVSLKDTIRGFKGILDGEFDHLPEQAFYMVGSIDEAVEKANKK.

ATP is bound at residue 148–155 (GGAGVGKT).

The protein belongs to the ATPase alpha/beta chains family. In terms of assembly, F-type ATPases have 2 components, CF(1) - the catalytic core - and CF(0) - the membrane proton channel. CF(1) has five subunits: alpha(3), beta(3), gamma(1), delta(1), epsilon(1). CF(0) has three main subunits: a(1), b(2) and c(9-12). The alpha and beta chains form an alternating ring which encloses part of the gamma chain. CF(1) is attached to CF(0) by a central stalk formed by the gamma and epsilon chains, while a peripheral stalk is formed by the delta and b chains.

The protein resides in the cell inner membrane. It catalyses the reaction ATP + H2O + 4 H(+)(in) = ADP + phosphate + 5 H(+)(out). Functionally, produces ATP from ADP in the presence of a proton gradient across the membrane. The catalytic sites are hosted primarily by the beta subunits. The polypeptide is ATP synthase subunit beta (Shewanella piezotolerans (strain WP3 / JCM 13877)).